The sequence spans 750 residues: E3 ubiquitin-protein ligase rfwd3.S (750 aa).

Positions 92-206 (RQAAEQRSSV…GAAPPAEPAP (115 aa)) are disordered. Residues 105–116 (RVQRRSTRRHQR) show a composition bias toward basic residues. Polar residues predominate over residues 122-144 (TAGTSSRAALSNFFQINRTQGVA). The span at 168-181 (SSDETVELSEEEEG) shows a compositional bias: acidic residues. An RING-type; degenerate zinc finger spans residues 263 to 307 (CAICFEPWTNAGQHRLSALRCGHLFGFTCIERWLKGGAAKCPQCN). The segment covering 387–405 (TSMQASSSRSTISGSLSSS) has biased composition (low complexity). Residues 387 to 406 (TSMQASSSRSTISGSLSSSQ) are disordered. 3 WD repeats span residues 470–510 (IHSK…VVQT), 512–552 (NTGR…NCVQ), and 558–603 (GSRC…YRPH).

[4Fe-4S] cluster is required as a cofactor.

The protein localises to the nucleus. The protein resides in the PML body. It is found in the cytoplasm. It catalyses the reaction S-ubiquitinyl-[E2 ubiquitin-conjugating enzyme]-L-cysteine + [acceptor protein]-L-lysine = [E2 ubiquitin-conjugating enzyme]-L-cysteine + N(6)-ubiquitinyl-[acceptor protein]-L-lysine.. It functions in the pathway protein modification; protein ubiquitination. Functionally, E3 ubiquitin-protein ligase required for the repair of DNA interstrand cross-links (ICL) in response to DNA damage. Plays a key role in RPA-mediated DNA damage signaling and repair. Required to translesion DNA synthesis across DNA-protein cross-link adducts by catalyzing ubiquitination of proteins on single-stranded DNA (ssDNA). Mediates ubiquitination of the hmces DNA-protein cross-link, possibly promoting its degradation. In Xenopus laevis (African clawed frog), this protein is E3 ubiquitin-protein ligase rfwd3.S (rfwd3.S).